The following is a 672-amino-acid chain: Methionine--tRNA ligase (672 aa).

Positions 12-22 match the 'HIGH' region motif; the sequence is AYTNGPLHLGH. 4 residues coordinate Zn(2+): Cys-144, Cys-147, Cys-156, and Cys-159. Positions 330 to 334 match the 'KMSKS' region motif; it reads KMSTS. Residue Thr-333 participates in ATP binding. The 100-residue stretch at 573–672 folds into the tRNA-binding domain; it reads DFAKIELKVA…KDLPVGSTIC (100 aa).

Belongs to the class-I aminoacyl-tRNA synthetase family. MetG type 1 subfamily. Homodimer. Zn(2+) is required as a cofactor.

It localises to the cytoplasm. The catalysed reaction is tRNA(Met) + L-methionine + ATP = L-methionyl-tRNA(Met) + AMP + diphosphate. Its function is as follows. Is required not only for elongation of protein synthesis but also for the initiation of all mRNA translation through initiator tRNA(fMet) aminoacylation. The chain is Methionine--tRNA ligase from Methanococcus aeolicus (strain ATCC BAA-1280 / DSM 17508 / OCM 812 / Nankai-3).